A 198-amino-acid polypeptide reads, in one-letter code: FMN-dependent NADH:quinone oxidoreductase (198 aa).

FMN-binding positions include 92–95 (MWNL) and 136–139 (SRGG).

Belongs to the azoreductase type 1 family. In terms of assembly, homodimer. Requires FMN as cofactor.

It carries out the reaction 2 a quinone + NADH + H(+) = 2 a 1,4-benzosemiquinone + NAD(+). It catalyses the reaction N,N-dimethyl-1,4-phenylenediamine + anthranilate + 2 NAD(+) = 2-(4-dimethylaminophenyl)diazenylbenzoate + 2 NADH + 2 H(+). In terms of biological role, quinone reductase that provides resistance to thiol-specific stress caused by electrophilic quinones. Its function is as follows. Also exhibits azoreductase activity. Catalyzes the reductive cleavage of the azo bond in aromatic azo compounds to the corresponding amines. The polypeptide is FMN-dependent NADH:quinone oxidoreductase (Clostridium perfringens (strain ATCC 13124 / DSM 756 / JCM 1290 / NCIMB 6125 / NCTC 8237 / Type A)).